We begin with the raw amino-acid sequence, 294 residues long: Nucleoside-specific channel-forming protein Tsx (294 aa).

The signal sequence occupies residues 1-22; that stretch reads MKKTLLAAGAVVALSTTFAAGA.

The protein belongs to the nucleoside-specific channel-forming outer membrane porin (Tsx) (TC 1.B.10) family.

The protein localises to the cell outer membrane. In terms of biological role, functions as a substrate-specific channel for nucleosides and deoxynucleosides. Also functions in albicidin uptake and as receptor for colicin K. Also is a receptor for several Tsx-specific bacteriophages. This chain is Nucleoside-specific channel-forming protein Tsx, found in Klebsiella pneumoniae.